Reading from the N-terminus, the 144-residue chain is Large ribosomal subunit protein uL14 (144 aa).

The protein belongs to the universal ribosomal protein uL14 family. Part of the 50S ribosomal subunit. Forms a cluster with proteins L3 and L24e, part of which may contact the 16S rRNA in 2 intersubunit bridges.

Its function is as follows. Binds to 23S rRNA. Forms part of two intersubunit bridges in the 70S ribosome. In Pyrobaculum islandicum (strain DSM 4184 / JCM 9189 / GEO3), this protein is Large ribosomal subunit protein uL14.